We begin with the raw amino-acid sequence, 370 residues long: Anhydro-N-acetylmuramic acid kinase (370 aa).

13-20 (GTSMDGVD) is a binding site for ATP.

This sequence belongs to the anhydro-N-acetylmuramic acid kinase family.

It carries out the reaction 1,6-anhydro-N-acetyl-beta-muramate + ATP + H2O = N-acetyl-D-muramate 6-phosphate + ADP + H(+). Its pathway is amino-sugar metabolism; 1,6-anhydro-N-acetylmuramate degradation. It functions in the pathway cell wall biogenesis; peptidoglycan recycling. Functionally, catalyzes the specific phosphorylation of 1,6-anhydro-N-acetylmuramic acid (anhMurNAc) with the simultaneous cleavage of the 1,6-anhydro ring, generating MurNAc-6-P. Is required for the utilization of anhMurNAc either imported from the medium or derived from its own cell wall murein, and thus plays a role in cell wall recycling. The chain is Anhydro-N-acetylmuramic acid kinase from Vibrio parahaemolyticus serotype O3:K6 (strain RIMD 2210633).